Reading from the N-terminus, the 116-residue chain is Large ribosomal subunit protein bL17 (116 aa).

This sequence belongs to the bacterial ribosomal protein bL17 family. As to quaternary structure, part of the 50S ribosomal subunit. Contacts protein L32.

This chain is Large ribosomal subunit protein bL17, found in Gloeobacter violaceus (strain ATCC 29082 / PCC 7421).